We begin with the raw amino-acid sequence, 508 residues long: Photosystem II CP47 reaction center protein (508 aa).

A run of 6 helical transmembrane segments spans residues 21–36 (AVHI…WAGS), 101–115 (IVFS…IWHW), 140–156 (GIHL…FGAF), 203–218 (IAAG…FHLS), 237–252 (VLSS…AFVV), and 457–472 (TFAL…HGAR).

It belongs to the PsbB/PsbC family. PsbB subfamily. PSII is composed of 1 copy each of membrane proteins PsbA, PsbB, PsbC, PsbD, PsbE, PsbF, PsbH, PsbI, PsbJ, PsbK, PsbL, PsbM, PsbT, PsbX, PsbY, PsbZ, Psb30/Ycf12, at least 3 peripheral proteins of the oxygen-evolving complex and a large number of cofactors. It forms dimeric complexes. The cofactor is Binds multiple chlorophylls. PSII binds additional chlorophylls, carotenoids and specific lipids..

It is found in the plastid. It localises to the chloroplast thylakoid membrane. In terms of biological role, one of the components of the core complex of photosystem II (PSII). It binds chlorophyll and helps catalyze the primary light-induced photochemical processes of PSII. PSII is a light-driven water:plastoquinone oxidoreductase, using light energy to abstract electrons from H(2)O, generating O(2) and a proton gradient subsequently used for ATP formation. This chain is Photosystem II CP47 reaction center protein, found in Secale cereale (Rye).